The sequence spans 301 residues: Porphobilinogen deaminase (301 aa).

An S-(dipyrrolylmethanemethyl)cysteine modification is found at Cys-235.

Belongs to the HMBS family. Monomer. The cofactor is dipyrromethane.

It catalyses the reaction 4 porphobilinogen + H2O = hydroxymethylbilane + 4 NH4(+). It functions in the pathway porphyrin-containing compound metabolism; protoporphyrin-IX biosynthesis; coproporphyrinogen-III from 5-aminolevulinate: step 2/4. Tetrapolymerization of the monopyrrole PBG into the hydroxymethylbilane pre-uroporphyrinogen in several discrete steps. This chain is Porphobilinogen deaminase, found in Thermus thermophilus (strain ATCC BAA-163 / DSM 7039 / HB27).